We begin with the raw amino-acid sequence, 349 residues long: E3 ubiquitin-protein ligase SINA-like 10 (349 aa).

The interval 1–77 (MARFSVCGGD…STSDDSDREV (77 aa)) is disordered. Residues 113 to 149 (CPICCEPLKIPIFQCDNGHLACTLCCTKVRNRCPSCT) form an RING-type; degenerate zinc finger. The segment at 163 to 344 (VIEASRVSCL…NLQIWIGHGR (182 aa)) is SBD. An SIAH-type zinc finger spans residues 166 to 224 (ASRVSCLNAKYGCKESTSYGNRFSHEQVCVFTPCSCPILDCHYTGYYKDLNNHVRAEHK). The Zn(2+) site is built by cysteine 171, cysteine 178, histidine 190, cysteine 194, cysteine 201, cysteine 206, histidine 218, and histidine 223.

This sequence belongs to the SINA (Seven in absentia) family.

It catalyses the reaction S-ubiquitinyl-[E2 ubiquitin-conjugating enzyme]-L-cysteine + [acceptor protein]-L-lysine = [E2 ubiquitin-conjugating enzyme]-L-cysteine + N(6)-ubiquitinyl-[acceptor protein]-L-lysine.. Its pathway is protein modification; protein ubiquitination. Functionally, E3 ubiquitin-protein ligase that mediates ubiquitination and subsequent proteasomal degradation of target proteins. E3 ubiquitin ligases accept ubiquitin from an E2 ubiquitin-conjugating enzyme in the form of a thioester and then directly transfers the ubiquitin to targeted substrates. It probably triggers the ubiquitin-mediated degradation of different substrates. The chain is E3 ubiquitin-protein ligase SINA-like 10 from Arabidopsis thaliana (Mouse-ear cress).